Consider the following 920-residue polypeptide: Translation initiation factor IF-2 (920 aa).

The interval 33-305 (KSASSTVEAP…RGRKSKRAKR (273 aa)) is disordered. A compositionally biased stretch (low complexity) spans 53–86 (SKSAPAPAKSAGNGATAAPATSATPATAAAAAAP). 3 stretches are compositionally biased toward pro residues: residues 87–159 (APAP…PAPR), 179–193 (PRPQ…PGTP), and 201–212 (NMPPRPAGPRPG). Positions 225 to 291 (PGGRGPGGGG…GAAGAFGRPG (67 aa)) are enriched in gly residues. Positions 295 to 304 (KRGRKSKRAK) are enriched in basic residues. The tr-type G domain occupies 416 to 588 (IRPPVVTVMG…VLLTADASLD (173 aa)). The segment at 425–432 (GHVDHGKT) is G1. Residue 425–432 (GHVDHGKT) coordinates GTP. The tract at residues 450–454 (GITQH) is G2. The G3 stretch occupies residues 475–478 (DTPG). Residues 475–479 (DTPGH) and 529–532 (NKID) contribute to the GTP site. The segment at 529 to 532 (NKID) is G4. Residues 565–567 (SAK) are G5.

Belongs to the TRAFAC class translation factor GTPase superfamily. Classic translation factor GTPase family. IF-2 subfamily.

The protein localises to the cytoplasm. In terms of biological role, one of the essential components for the initiation of protein synthesis. Protects formylmethionyl-tRNA from spontaneous hydrolysis and promotes its binding to the 30S ribosomal subunits. Also involved in the hydrolysis of GTP during the formation of the 70S ribosomal complex. The sequence is that of Translation initiation factor IF-2 from Mycobacterium sp. (strain JLS).